The primary structure comprises 210 residues: Large ribosomal subunit protein uL4 (210 aa).

The segment at Val-57–Asn-78 is disordered.

Belongs to the universal ribosomal protein uL4 family. In terms of assembly, part of the 50S ribosomal subunit.

In terms of biological role, one of the primary rRNA binding proteins, this protein initially binds near the 5'-end of the 23S rRNA. It is important during the early stages of 50S assembly. It makes multiple contacts with different domains of the 23S rRNA in the assembled 50S subunit and ribosome. Forms part of the polypeptide exit tunnel. The sequence is that of Large ribosomal subunit protein uL4 from Desulfovibrio desulfuricans (strain ATCC 27774 / DSM 6949 / MB).